The chain runs to 494 residues: Amidophosphoribosyltransferase (494 aa).

The propeptide occupies methionine 1 to glutamate 10. Cysteine 11 functions as the Nucleophile in the catalytic mechanism. One can recognise a Glutamine amidotransferase type-2 domain in the interval cysteine 11–glutamate 231. Residues serine 294, aspartate 356, and aspartate 357 each coordinate Mg(2+).

This sequence in the C-terminal section; belongs to the purine/pyrimidine phosphoribosyltransferase family. Requires Mg(2+) as cofactor.

It carries out the reaction 5-phospho-beta-D-ribosylamine + L-glutamate + diphosphate = 5-phospho-alpha-D-ribose 1-diphosphate + L-glutamine + H2O. It functions in the pathway purine metabolism; IMP biosynthesis via de novo pathway; N(1)-(5-phospho-D-ribosyl)glycinamide from 5-phospho-alpha-D-ribose 1-diphosphate: step 1/2. In terms of biological role, catalyzes the formation of phosphoribosylamine from phosphoribosylpyrophosphate (PRPP) and glutamine. In Staphylococcus epidermidis (strain ATCC 35984 / DSM 28319 / BCRC 17069 / CCUG 31568 / BM 3577 / RP62A), this protein is Amidophosphoribosyltransferase.